A 170-amino-acid polypeptide reads, in one-letter code: Vimentin A1 (170 aa).

Over residues 1–10 (DLTEAANKSN) the composition is skewed to polar residues. Residues 1–20 (DLTEAANKSNEALRLAKQES) are disordered. The tract at residues 1 to 111 (DLTEAANKSN…ATYRKLLEGE (111 aa)) is coil 2. Residues 1–115 (DLTEAANKSN…KLLEGEESRI (115 aa)) form the IF rod domain. Residues 112–170 (ESRISTPLPNFSSFNLRETMLELKPNIESTFTKKVLIKTIETRDGQVLNESTQNHDDLE) are tail.

It belongs to the intermediate filament family. In terms of assembly, homomer. In terms of processing, one of the most prominent phosphoproteins in various cells of mesenchymal origin. Phosphorylation is enhanced during cell division, at which time vimentin filaments are significantly reorganized. In terms of tissue distribution, expressed in low amounts in retina, optic nerve, and brain and in higher amounts in spinal cord.

Its function is as follows. Vimentins are class-III intermediate filaments found in various non-epithelial cells, especially mesenchymal cells. Vimentin is attached to the nucleus, endoplasmic reticulum, and mitochondria, either laterally or terminally. The sequence is that of Vimentin A1 from Carassius auratus (Goldfish).